The following is a 407-amino-acid chain: Elongation factor Tu (407 aa).

Residues 10–217 (KPHVNVGTIG…TLDEYIPEPE (208 aa)) form the tr-type G domain. A G1 region spans residues 19–26 (GHVDHGKT). 19–26 (GHVDHGKT) provides a ligand contact to GTP. Thr-26 contacts Mg(2+). The G2 stretch occupies residues 60-64 (GITIA). Positions 81–84 (DCPG) are G3. GTP-binding positions include 81–85 (DCPGH) and 136–139 (NKAD). Positions 136-139 (NKAD) are G4. Residues 184 to 186 (SAL) are G5.

This sequence belongs to the TRAFAC class translation factor GTPase superfamily. Classic translation factor GTPase family. EF-Tu/EF-1A subfamily. Monomer.

Its subcellular location is the cytoplasm. The enzyme catalyses GTP + H2O = GDP + phosphate + H(+). In terms of biological role, GTP hydrolase that promotes the GTP-dependent binding of aminoacyl-tRNA to the A-site of ribosomes during protein biosynthesis. The polypeptide is Elongation factor Tu (Teredinibacter turnerae (strain ATCC 39867 / T7901)).